The following is a 357-amino-acid chain: Red-sensitive opsin (357 aa).

The Extracellular portion of the chain corresponds to 1–49 (MAEQWGKQVFAARRQNEDTTRGSAFTYTNSNHTRDPFEGPNYHIAPRWV). N31 carries N-linked (GlcNAc...) asparagine glycosylation. A helical transmembrane segment spans residues 50-74 (YNLATLWMFFVVVLSVFTNGLVLVA). Residues 75 to 86 (TAKFKKLRHPLN) are Cytoplasmic-facing. Residues 87–112 (WILSNLAIADLGETVFASTISVCNQF) traverse the membrane as a helical segment. The Extracellular segment spans residues 113 to 126 (FGYFILGHPMCVFE). A disulfide bond links C123 and C200. Residues 127-146 (GYVVSTCGIAALWSLTIISW) traverse the membrane as a helical segment. The Cytoplasmic portion of the chain corresponds to 147–165 (ERWVVVCKPFGNVKFDAKW). A helical membrane pass occupies residues 166–189 (AIGGIVFSWVWSAVWCAPPVFGWS). Topologically, residues 190 to 215 (RYWPHGLKTSCGPDVFSGSDDPGVQS) are extracellular. A helical membrane pass occupies residues 216-243 (YMIVLMITCCIIPLAIIILCYLAVWLAI). Over 244-265 (RAVAMQQKESESTQKAEREVSR) the chain is Cytoplasmic. Residues 266 to 289 (MVVVMIVAYCVCWGPYTFFACFAA) form a helical membrane-spanning segment. At 290–297 (ANPGYAFH) the chain is on the extracellular side. The chain crosses the membrane as a helical span at residues 298 to 322 (PLAAAMPAYFAKSATIYNPVIYVFM). K309 bears the N6-(retinylidene)lysine mark. Residues 323–357 (NRQFRTCIMQLFGKQVDDGSEVSTSKTEVSSVAPA) lie on the Cytoplasmic side of the membrane.

This sequence belongs to the G-protein coupled receptor 1 family. Opsin subfamily. Post-translationally, phosphorylated on some or all of the serine and threonine residues present in the C-terminal region. As to expression, the color pigments are found in the cone photoreceptor cells.

Its subcellular location is the membrane. In terms of biological role, visual pigments are the light-absorbing molecules that mediate vision. They consist of an apoprotein, opsin, covalently linked to cis-retinal. This is Red-sensitive opsin from Oryzias latipes (Japanese rice fish).